The sequence spans 81 residues: Large ribosomal subunit protein bL31B (81 aa).

The protein belongs to the bacterial ribosomal protein bL31 family. Type B subfamily. Part of the 50S ribosomal subunit.

The protein is Large ribosomal subunit protein bL31B of Bacillus cereus (strain G9842).